A 484-amino-acid chain; its full sequence is Neuronal acetylcholine receptor subunit alpha-9 (484 aa).

An N-terminal signal peptide occupies residues 1–27 (MKRNNLSSFYVSLWLLFTATMLQAVES). Residues 28–240 (AKGKYAQMLF…FTLILKRKSS (213 aa)) are Extracellular-facing. N-linked (GlcNAc...) asparagine glycosylation is present at N59. An intrachain disulfide couples C157 to C171. N-linked (GlcNAc...) asparagine glycosylation occurs at N172. 2 residues coordinate Na(+): S193 and D195. C221 and C222 are joined by a disulfide. 3 consecutive transmembrane segments (helical) span residues 241–261 (FYIFNLLLPCILISFLAPLGF), 271–291 (VSLGVTVLLALTVFQLMVAEI), and 305–325 (YIATMTMITASTALTIIIMNV). Residues 326-462 (HHCGSEAKPV…WKKVAKVMDR (137 aa)) lie on the Cytoplasmic side of the membrane. Residues 364–395 (RREKEQEHRLEGGDMCRGGDGKSHLSSRNDDS) are disordered. A helical membrane pass occupies residues 463 to 483 (FFMWIFFIMVFFMSVLIIGKA).

This sequence belongs to the ligand-gated ion channel (TC 1.A.9) family. Acetylcholine receptor (TC 1.A.9.1) subfamily. Alpha-9/CHRNA9 sub-subfamily. In terms of assembly, forms homo- or heteropentameric channels in conjunction with CHRNA10. The native outer hair cell receptor is composed of CHRNA9:CHRNA10 heterooligomers. Found in the stoichiometric form (CHRNA9)2:(CHRNA10)3. In terms of tissue distribution, expressed in hair cells of the cochlea (at protein level). Expressed in hair cells of the cochlea.

Its subcellular location is the synaptic cell membrane. The protein localises to the cell membrane. The catalysed reaction is Ca(2+)(in) = Ca(2+)(out). It catalyses the reaction K(+)(in) = K(+)(out). It carries out the reaction Na(+)(in) = Na(+)(out). The enzyme catalyses Mg(2+)(in) = Mg(2+)(out). With respect to regulation, activated by a myriad of ligands such as acetylcholine. AChR activity is inhibited by the antagonist alpha-conotoxins RgIA and GeXXA, small disulfide-constrained peptides from cone snails. Functionally, component of neuronal acetylcholine receptors (nAChRs) that function as pentameric, ligand-gated cation channels with high calcium permeability among other activities. nAChRs are excitatory neurotrasnmitter receptors formed by a collection of nAChR subunits known to mediate synaptic transmission in the nervous system and the neuromuscular junction. Each nAchR subunit confers differential attributes to channel properties, including activation, deactivation and desensitization kinetics, pH sensitivity, cation permeability, and binding to allosteric modulators. Forms either homopentamers or heteropentamers with CHRNA10. Expressed in the inner ear, in sympathetic neurons and in other non-neuronal cells, such as skin keratinocytes and lymphocytes. The channel is permeable to a range of divalent cations including calcium, the influx of which may activate a potassium current which hyperpolarizes the cell membrane. The sequence is that of Neuronal acetylcholine receptor subunit alpha-9 (CHRNA9) from Gallus gallus (Chicken).